Consider the following 233-residue polypeptide: Probable cyclic nucleotide phosphodiesterase COSY_0614 (233 aa).

Residues aspartate 10, histidine 12, aspartate 48, asparagine 78, histidine 144, histidine 183, and histidine 185 each coordinate Fe cation. AMP is bound by residues histidine 12, aspartate 48, and 78–79; that span reads NH. Residue histidine 185 coordinates AMP.

This sequence belongs to the cyclic nucleotide phosphodiesterase class-III family. Requires Fe(2+) as cofactor.

This Vesicomyosocius okutanii subsp. Calyptogena okutanii (strain HA) protein is Probable cyclic nucleotide phosphodiesterase COSY_0614.